The following is a 425-amino-acid chain: Succinyl-diaminopimelate desuccinylase (425 aa).

His96 contacts Zn(2+). Asp98 is a catalytic residue. Asp129 serves as a coordination point for Zn(2+). Glu163 acts as the Proton acceptor in catalysis. Zn(2+) contacts are provided by Glu164, Glu192, and His378.

The protein belongs to the peptidase M20A family. DapE subfamily. In terms of assembly, homodimer. It depends on Zn(2+) as a cofactor. Co(2+) is required as a cofactor.

It carries out the reaction N-succinyl-(2S,6S)-2,6-diaminopimelate + H2O = (2S,6S)-2,6-diaminopimelate + succinate. It functions in the pathway amino-acid biosynthesis; L-lysine biosynthesis via DAP pathway; LL-2,6-diaminopimelate from (S)-tetrahydrodipicolinate (succinylase route): step 3/3. Catalyzes the hydrolysis of N-succinyl-L,L-diaminopimelic acid (SDAP), forming succinate and LL-2,6-diaminopimelate (DAP), an intermediate involved in the bacterial biosynthesis of lysine and meso-diaminopimelic acid, an essential component of bacterial cell walls. The chain is Succinyl-diaminopimelate desuccinylase from Polaromonas sp. (strain JS666 / ATCC BAA-500).